The sequence spans 286 residues: Bifunctional protein FolD (286 aa).

Residues 166–168 and isoleucine 232 contribute to the NADP(+) site; that span reads GAS.

It belongs to the tetrahydrofolate dehydrogenase/cyclohydrolase family. As to quaternary structure, homodimer.

The catalysed reaction is (6R)-5,10-methylene-5,6,7,8-tetrahydrofolate + NADP(+) = (6R)-5,10-methenyltetrahydrofolate + NADPH. The enzyme catalyses (6R)-5,10-methenyltetrahydrofolate + H2O = (6R)-10-formyltetrahydrofolate + H(+). It participates in one-carbon metabolism; tetrahydrofolate interconversion. Catalyzes the oxidation of 5,10-methylenetetrahydrofolate to 5,10-methenyltetrahydrofolate and then the hydrolysis of 5,10-methenyltetrahydrofolate to 10-formyltetrahydrofolate. The protein is Bifunctional protein FolD of Shewanella denitrificans (strain OS217 / ATCC BAA-1090 / DSM 15013).